The chain runs to 128 residues: 2-iminobutanoate/2-iminopropanoate deaminase (128 aa).

Residue Arg105 participates in substrate binding.

It belongs to the RutC family. In terms of assembly, homotrimer.

Its subcellular location is the cytoplasm. It carries out the reaction 2-iminobutanoate + H2O = 2-oxobutanoate + NH4(+). The catalysed reaction is 2-iminopropanoate + H2O = pyruvate + NH4(+). It participates in amino-acid biosynthesis; L-isoleucine biosynthesis; 2-oxobutanoate from L-threonine. In terms of biological role, accelerates the release of ammonia from reactive enamine/imine intermediates of the PLP-dependent threonine dehydratase (IlvA) in the low water environment of the cell. It catalyzes the deamination of enamine/imine intermediates to yield 2-ketobutyrate and ammonia. It is required for the detoxification of reactive intermediates of IlvA due to their highly nucleophilic abilities and to avoid they are captured by anthranilate phosphoribosyltransferase (TrpD) to generate PRA, an intermediate in the alternative pyrimidine biosynthetic (APB) pathway. Also required for full activity of IlvE which is involved in the isoleucine biosynthesis. RidA also accelerates the release of pyruvate produced by IlvA from L-serine. The polypeptide is 2-iminobutanoate/2-iminopropanoate deaminase (Salmonella typhimurium (strain LT2 / SGSC1412 / ATCC 700720)).